Consider the following 609-residue polypeptide: Meiotically up-regulated gene 28 protein (609 aa).

RRM domains are found at residues 20–103 (ISIY…YTHI) and 419–499 (CNLF…YAEK).

The protein resides in the cytoplasm. Has a role in sporulation. The polypeptide is Meiotically up-regulated gene 28 protein (mug28) (Schizosaccharomyces pombe (strain 972 / ATCC 24843) (Fission yeast)).